A 70-amino-acid chain; its full sequence is SPbeta prophage-derived uncharacterized protein YorZ (70 aa).

The protein is SPbeta prophage-derived uncharacterized protein YorZ (yorZ) of Bacillus subtilis (strain 168).